A 128-amino-acid polypeptide reads, in one-letter code: Small ribosomal subunit protein uS12 (128 aa).

The tract at residues 1–30 is disordered; the sequence is MPTINQLIRKGREPKERKSKSPALMGNPQK. Position 89 is a 3-methylthioaspartic acid (Asp-89). The tract at residues 106–128 is disordered; that stretch reads GVEGRKQGRSKYGTKRPKEGGKK.

It belongs to the universal ribosomal protein uS12 family. As to quaternary structure, part of the 30S ribosomal subunit. Contacts proteins S8 and S17. May interact with IF1 in the 30S initiation complex.

Its function is as follows. With S4 and S5 plays an important role in translational accuracy. Interacts with and stabilizes bases of the 16S rRNA that are involved in tRNA selection in the A site and with the mRNA backbone. Located at the interface of the 30S and 50S subunits, it traverses the body of the 30S subunit contacting proteins on the other side and probably holding the rRNA structure together. The combined cluster of proteins S8, S12 and S17 appears to hold together the shoulder and platform of the 30S subunit. This chain is Small ribosomal subunit protein uS12, found in Dictyoglomus thermophilum (strain ATCC 35947 / DSM 3960 / H-6-12).